A 583-amino-acid polypeptide reads, in one-letter code: Moesin/ezrin/radixin homolog 1 (583 aa).

The FERM domain occupies Met-11–Arg-301. Disordered regions lie at residues Thr-466 to Ala-518 and Arg-539 to Gly-558. Residues Glu-476–Leu-485 show a composition bias toward acidic residues. A compositionally biased stretch (basic and acidic residues) spans Asp-496 to Ala-518. Residue Thr-564 is modified to Phosphothreonine.

Interacts with cytoskeletal actin.

It is found in the cell junction. The protein resides in the adherens junction. It localises to the cell projection. The protein localises to the microvillus. Its subcellular location is the rhabdomere. It is found in the cell membrane. The protein resides in the cytoplasm. It localises to the cytoskeleton. Functionally, involved in connections of major cytoskeletal structures to the plasma membrane. This is Moesin/ezrin/radixin homolog 1 from Aedes aegypti (Yellowfever mosquito).